Consider the following 1045-residue polypeptide: Eukaryotic translation initiation factor 5B (1045 aa).

Disordered regions lie at residues 1–325 and 339–384; these read MGPK…AAEA and SAVG…PKDD. Residues 8 to 27 show a composition bias toward basic and acidic residues; that stretch reads RKDNYWDSGEADKDREEAEK. The span at 62–73 shows a compositional bias: acidic residues; that stretch reads SSSESEESSSEE. A compositionally biased stretch (low complexity) spans 81-92; sequence KPAAKQSKKVAP. Acidic residues-rich tracts occupy residues 105-120, 155-169, and 199-212; these read SSEE…ESSE, SSEE…SSSE, and SESE…EEEE. The span at 216 to 241 shows a compositional bias: low complexity; it reads KPTQNNNNKKNNAKKPPAAKPSAAKQ. Basic and acidic residues predominate over residues 264–325; sequence QRQEEERIAR…EKQAGAAAEA (62 aa). Residues 351 to 361 show a composition bias toward low complexity; that stretch reads KTKSGGKKQNQ. A compositionally biased stretch (basic and acidic residues) spans 368–384; it reads SVEKLKIEEPTSAPKDD. The tr-type G domain occupies 458-675; sequence YRSPIICILG…VVIQLMQKLM (218 aa). The segment at 467–474 is G1; that stretch reads GHVDTGKT. Position 467-474 (467-474) interacts with GTP; it reads GHVDTGKT. Residues 492 to 496 are G2; sequence GITQQ. The G3 stretch occupies residues 531–534; it reads DTPG. The interval 585-588 is G4; sequence NKVD. The tract at residues 653–655 is G5; sequence SAN.

Belongs to the TRAFAC class translation factor GTPase superfamily. Classic translation factor GTPase family. IF-2 subfamily. It depends on a monovalent cation as a cofactor.

The protein localises to the cytoplasm. It carries out the reaction GTP + H2O = GDP + phosphate + H(+). Its function is as follows. Plays a role in translation initiation. Translational GTPase that catalyzes the joining of the 40S and 60S subunits to form the 80S initiation complex with the initiator methionine-tRNA in the P-site base paired to the start codon. GTP binding and hydrolysis induces conformational changes in the enzyme that renders it active for productive interactions with the ribosome. The release of the enzyme after formation of the initiation complex is a prerequisite to form elongation-competent ribosomes. This chain is Eukaryotic translation initiation factor 5B (eif5b), found in Dictyostelium discoideum (Social amoeba).